Reading from the N-terminus, the 72-residue chain is Cytochrome c oxidase subunit 2 (72 aa).

Over 1–14 (MAHPSQLGFQDAAS) the chain is Mitochondrial intermembrane. Residues 15-45 (PVMEELLHFHDHALMIVFLISTLVLYIIVAM) traverse the membrane as a helical segment. Residues 46-72 (VSTKLTNKHILDSQEVEIVWTILPAVI) lie on the Mitochondrial matrix side of the membrane.

The protein belongs to the cytochrome c oxidase subunit 2 family. In terms of assembly, component of the cytochrome c oxidase (complex IV, CIV), a multisubunit enzyme composed of 14 subunits. The complex is composed of a catalytic core of 3 subunits MT-CO1, MT-CO2 and MT-CO3, encoded in the mitochondrial DNA, and 11 supernumerary subunits COX4I, COX5A, COX5B, COX6A, COX6B, COX6C, COX7A, COX7B, COX7C, COX8 and NDUFA4, which are encoded in the nuclear genome. The complex exists as a monomer or a dimer and forms supercomplexes (SCs) in the inner mitochondrial membrane with NADH-ubiquinone oxidoreductase (complex I, CI) and ubiquinol-cytochrome c oxidoreductase (cytochrome b-c1 complex, complex III, CIII), resulting in different assemblies (supercomplex SCI(1)III(2)IV(1) and megacomplex MCI(2)III(2)IV(2)). Found in a complex with TMEM177, COA6, COX18, COX20, SCO1 and SCO2. Interacts with TMEM177 in a COX20-dependent manner. Interacts with COX20. Interacts with COX16. Cu cation serves as cofactor.

The protein localises to the mitochondrion inner membrane. The catalysed reaction is 4 Fe(II)-[cytochrome c] + O2 + 8 H(+)(in) = 4 Fe(III)-[cytochrome c] + 2 H2O + 4 H(+)(out). Functionally, component of the cytochrome c oxidase, the last enzyme in the mitochondrial electron transport chain which drives oxidative phosphorylation. The respiratory chain contains 3 multisubunit complexes succinate dehydrogenase (complex II, CII), ubiquinol-cytochrome c oxidoreductase (cytochrome b-c1 complex, complex III, CIII) and cytochrome c oxidase (complex IV, CIV), that cooperate to transfer electrons derived from NADH and succinate to molecular oxygen, creating an electrochemical gradient over the inner membrane that drives transmembrane transport and the ATP synthase. Cytochrome c oxidase is the component of the respiratory chain that catalyzes the reduction of oxygen to water. Electrons originating from reduced cytochrome c in the intermembrane space (IMS) are transferred via the dinuclear copper A center (CU(A)) of subunit 2 and heme A of subunit 1 to the active site in subunit 1, a binuclear center (BNC) formed by heme A3 and copper B (CU(B)). The BNC reduces molecular oxygen to 2 water molecules using 4 electrons from cytochrome c in the IMS and 4 protons from the mitochondrial matrix. In Atractosteus spatula (Alligator gar), this protein is Cytochrome c oxidase subunit 2 (mt-co2).